Reading from the N-terminus, the 559-residue chain is Urocanate hydratase (559 aa).

NAD(+)-binding positions include 54 to 55, Gln-132, 178 to 180, Glu-198, Arg-203, 244 to 245, 265 to 269, 275 to 276, and Tyr-324; these read GG, GMG, NA, QTSAH, and YL. The active site involves Cys-412. An NAD(+)-binding site is contributed by Gly-494.

It belongs to the urocanase family. NAD(+) serves as cofactor.

The protein localises to the cytoplasm. It catalyses the reaction 4-imidazolone-5-propanoate = trans-urocanate + H2O. Its pathway is amino-acid degradation; L-histidine degradation into L-glutamate; N-formimidoyl-L-glutamate from L-histidine: step 2/3. Its function is as follows. Catalyzes the conversion of urocanate to 4-imidazolone-5-propionate. The polypeptide is Urocanate hydratase (Azotobacter vinelandii (strain DJ / ATCC BAA-1303)).